A 246-amino-acid chain; its full sequence is 1-(5-phosphoribosyl)-5-[(5-phosphoribosylamino)methylideneamino] imidazole-4-carboxamide isomerase (246 aa).

D8 serves as the catalytic Proton acceptor. Catalysis depends on D131, which acts as the Proton donor.

It belongs to the HisA/HisF family.

Its subcellular location is the cytoplasm. The enzyme catalyses 1-(5-phospho-beta-D-ribosyl)-5-[(5-phospho-beta-D-ribosylamino)methylideneamino]imidazole-4-carboxamide = 5-[(5-phospho-1-deoxy-D-ribulos-1-ylimino)methylamino]-1-(5-phospho-beta-D-ribosyl)imidazole-4-carboxamide. It participates in amino-acid biosynthesis; L-histidine biosynthesis; L-histidine from 5-phospho-alpha-D-ribose 1-diphosphate: step 4/9. This is 1-(5-phosphoribosyl)-5-[(5-phosphoribosylamino)methylideneamino] imidazole-4-carboxamide isomerase from Polaromonas sp. (strain JS666 / ATCC BAA-500).